The following is a 172-amino-acid chain: GTP-dependent dephospho-CoA kinase (172 aa).

Asp-49, Val-50, Val-51, Asp-68, Lys-70, and Glu-120 together coordinate GTP.

Belongs to the GTP-dependent DPCK family.

The catalysed reaction is 3'-dephospho-CoA + GTP = GDP + CoA + H(+). It functions in the pathway cofactor biosynthesis; coenzyme A biosynthesis. Catalyzes the GTP-dependent phosphorylation of the 3'-hydroxyl group of dephosphocoenzyme A to form coenzyme A (CoA). The polypeptide is GTP-dependent dephospho-CoA kinase (Pyrobaculum arsenaticum (strain DSM 13514 / JCM 11321 / PZ6)).